Here is a 91-residue protein sequence, read N- to C-terminus: Gem-associated protein 7 homolog (91 aa).

The 69-residue stretch at Leu18–Gln86 folds into the Sm domain.

The protein belongs to the gemin-7 family. Part of the core SMN complex at least composed of smn1, yip11/gem2, gem6, gem7 and gem8. Interacts with gem6; the interaction is direct. Interacts with gem8; the interaction is direct.

This is Gem-associated protein 7 homolog from Schizosaccharomyces pombe (strain 972 / ATCC 24843) (Fission yeast).